Consider the following 266-residue polypeptide: Ribosomal RNA small subunit methyltransferase A (266 aa).

S-adenosyl-L-methionine contacts are provided by asparagine 10, isoleucine 12, glycine 37, glutamate 58, aspartate 82, and asparagine 105.

It belongs to the class I-like SAM-binding methyltransferase superfamily. rRNA adenine N(6)-methyltransferase family. RsmA subfamily.

It is found in the cytoplasm. The catalysed reaction is adenosine(1518)/adenosine(1519) in 16S rRNA + 4 S-adenosyl-L-methionine = N(6)-dimethyladenosine(1518)/N(6)-dimethyladenosine(1519) in 16S rRNA + 4 S-adenosyl-L-homocysteine + 4 H(+). In terms of biological role, specifically dimethylates two adjacent adenosines (A1518 and A1519) in the loop of a conserved hairpin near the 3'-end of 16S rRNA in the 30S particle. May play a critical role in biogenesis of 30S subunits. The polypeptide is Ribosomal RNA small subunit methyltransferase A (Mycoplasma mycoides subsp. mycoides SC (strain CCUG 32753 / NCTC 10114 / PG1)).